Reading from the N-terminus, the 358-residue chain is tRNA-specific 2-thiouridylase MnmA (358 aa).

Residues 8–15 and methionine 35 each bind ATP; that span reads AMSGGVDS. An interaction with target base in tRNA region spans residues 95–97; sequence NPD. Cysteine 100 serves as the catalytic Nucleophile. A disulfide bond links cysteine 100 and cysteine 194. Position 124 (glycine 124) interacts with ATP. The interaction with tRNA stretch occupies residues 144-146; that stretch reads KDQ. The Cysteine persulfide intermediate role is filled by cysteine 194. The interaction with tRNA stretch occupies residues 301 to 302; it reads RY.

The protein belongs to the MnmA/TRMU family.

The protein resides in the cytoplasm. It carries out the reaction S-sulfanyl-L-cysteinyl-[protein] + uridine(34) in tRNA + AH2 + ATP = 2-thiouridine(34) in tRNA + L-cysteinyl-[protein] + A + AMP + diphosphate + H(+). In terms of biological role, catalyzes the 2-thiolation of uridine at the wobble position (U34) of tRNA, leading to the formation of s(2)U34. The protein is tRNA-specific 2-thiouridylase MnmA of Chlamydia trachomatis serovar L2 (strain ATCC VR-902B / DSM 19102 / 434/Bu).